A 407-amino-acid polypeptide reads, in one-letter code: MRRLPIVLLLSVFSIANCAKVDVDLINETIRDLLHFKSSDPNVTSFHRSSHTLTEHMKNLYENFIDEDSNEDGNLVRAIEPAVGKFEGQEVLVFDVEGFDSHESIMRAELHFYLRRRDSFARRRSRQIRAKSVCVNEYCRQQTLKKIRVGGDENLEEYKVIWDATKSVFDSYHLDAKQAVFRITREHSKMRPYAEMIRKSTPFLVIYSKVNHTLDTVSVMKQTEQTKRKRRDLGNEELREYYNYNSIPLDNDDREPIKRKNGKKNSLSEEISSEDVWQGFGEETSREERERIANEELANDVRVVLLQNKNRCHKEGVLVSLKHFGWDRYVIEPKTIETSFCKGKCAKPMLTSGKASNHAMLQSLFAAEPVCCAPTNLKSLNFWYRDEKGRTVIRNYSKMLIGSCSCL.

Positions 1 to 18 are cleaved as a signal peptide; the sequence is MRRLPIVLLLSVFSIANC. N-linked (GlcNAc...) asparagine glycans are attached at residues asparagine 27, asparagine 42, and asparagine 211. Residues 252–283 are disordered; it reads DDREPIKRKNGKKNSLSEEISSEDVWQGFGEE. Residue asparagine 395 is glycosylated (N-linked (GlcNAc...) asparagine).

This sequence belongs to the TGF-beta family. In terms of assembly, interacts with netrin receptor unc-5; the interaction is direct.

The protein localises to the secreted. Its subcellular location is the extracellular space. Required for the migration of axonal growth-cones and distal tip cells (DTC) along the dorsal-ventral axis of the body wall. Acts cell nonautonomously and independently of the classical daf-4, sma-6 or daf-1 TGFbeta receptor signaling. During axon migration, facilitates long-range repulsive guidance of unc-6/netrin by enhancing unc-5-unc-40 signaling at the expense of unc-5 alone signaling, probably through direct interaction with receptor unc-5. Involved in cell-cell contact formation in sensory rays in the developing male tail, via a pathway involving plx-2 and mab-20/semaphorin-2A. The polypeptide is BMP-like protein unc-129 (Caenorhabditis elegans).